Here is a 204-residue protein sequence, read N- to C-terminus: Large ribosomal subunit protein eL15 (204 aa).

Belongs to the eukaryotic ribosomal protein eL15 family. Component of the large ribosomal subunit.

The protein localises to the cytoplasm. Its function is as follows. Component of the large ribosomal subunit. The ribosome is a large ribonucleoprotein complex responsible for the synthesis of proteins in the cell. In Hypophthalmichthys nobilis (Bighead carp), this protein is Large ribosomal subunit protein eL15 (rpl15).